The following is a 163-amino-acid chain: UPF0416 protein RBE_1121 (163 aa).

Belongs to the UPF0416 family.

The polypeptide is UPF0416 protein RBE_1121 (Rickettsia bellii (strain RML369-C)).